Consider the following 65-residue polypeptide: uncharacterized protein (65 aa).

This is an uncharacterized protein from Saccharomyces cerevisiae (strain ATCC 204508 / S288c) (Baker's yeast).